The primary structure comprises 358 residues: MPAMLTDVFRGHPIHLPHSHIPDFTSLRELPDSYKWTPKDDLLFSAAPSPPATGENIPLIDLDHPDATNQIGHACRTWGAFQISNHGVPLGLLQDIEFLTGSLFGLPVQRKLKSARSETGVSGYGVARIASFFNKQMWSEGFTITGSPLNDFRKLWPQHHLNYCDIVEEYEEHMKKLASKLMWLALNSLGVSEEDIEWASLSSDLNWAQAALQLNHYPVCPEPDRAMGLAAHTDSTLLTILYQNNTAGLQVFRDDLGWVTVPPFPGSLVVNVGDLFHILSNGLFKSVLHRARVNQTRARLSVAFLWGPQSDIKISPVPKLVSPVESPLYQSVTWKEYLRTKATHFNKALSMIRNHREE.

The region spanning 204-308 is the Fe2OG dioxygenase domain; it reads DLNWAQAALQ…RLSVAFLWGP (105 aa). His-232, Asp-234, and His-289 together coordinate Fe cation. The active site involves Arg-299.

This sequence belongs to the iron/ascorbate-dependent oxidoreductase family. GA3OX subfamily. L-ascorbate serves as cofactor. It depends on Fe cation as a cofactor. As to expression, expressed in stems, roots, leaves, flowers, and siliques. Highly expressed near the nodes in stems and in the stamen filaments of flowers. Detected in developing cotyledons, vegetative shoot apical meristem and non-meristematic, non-elongation regions of the roots. Found in the cortex and the endodermis of the embryo axis in germinating seeds and in the placenta in developing siliques.

It carries out the reaction gibberellin A9 + 2-oxoglutarate + O2 = gibberellin A4 + succinate + CO2. It catalyses the reaction gibberellin A20 + 2-oxoglutarate + O2 = gibberellin A1 + succinate + CO2. It functions in the pathway plant hormone biosynthesis; gibberellin biosynthesis. In terms of biological role, converts the inactive gibberellin (GA) precursors GA9 and GA20 into the bioactives gibberellins GA4 and GA1, respectively. Involved in the production of bioactive GA for vegetative growth and development. This is Gibberellin 3-beta-dioxygenase 1 (GA3OX1) from Arabidopsis thaliana (Mouse-ear cress).